The primary structure comprises 195 residues: Endoribonuclease YbeY (195 aa).

Positions 152, 156, and 162 each coordinate Zn(2+).

This sequence belongs to the endoribonuclease YbeY family. Zn(2+) serves as cofactor.

Its subcellular location is the cytoplasm. In terms of biological role, single strand-specific metallo-endoribonuclease involved in late-stage 70S ribosome quality control and in maturation of the 3' terminus of the 16S rRNA. The sequence is that of Endoribonuclease YbeY from Rhodopseudomonas palustris (strain HaA2).